A 261-amino-acid polypeptide reads, in one-letter code: Type II restriction enzyme Sau96I (261 aa).

Monomer.

It catalyses the reaction Endonucleolytic cleavage of DNA to give specific double-stranded fragments with terminal 5'-phosphates.. A P subtype restriction enzyme that recognizes the double-stranded sequence 5'-GGNCC-3' and cleaves after G-1. This is Type II restriction enzyme Sau96I from Staphylococcus aureus.